Consider the following 190-residue polypeptide: Threonylcarbamoyl-AMP synthase (190 aa).

The YrdC-like domain occupies 7–190; sequence ADAISFIVDV…ALTGELFRQG (184 aa).

This sequence belongs to the SUA5 family. TsaC subfamily.

The protein localises to the cytoplasm. It catalyses the reaction L-threonine + hydrogencarbonate + ATP = L-threonylcarbamoyladenylate + diphosphate + H2O. In terms of biological role, required for the formation of a threonylcarbamoyl group on adenosine at position 37 (t(6)A37) in tRNAs that read codons beginning with adenine. Catalyzes the conversion of L-threonine, HCO(3)(-)/CO(2) and ATP to give threonylcarbamoyl-AMP (TC-AMP) as the acyladenylate intermediate, with the release of diphosphate. In Cronobacter sakazakii (strain ATCC BAA-894) (Enterobacter sakazakii), this protein is Threonylcarbamoyl-AMP synthase.